The sequence spans 313 residues: Ribosomal RNA small subunit methyltransferase H (313 aa).

S-adenosyl-L-methionine-binding positions include Gly35–His37, Asp55, Phe79, Asp101, and Gln108.

It belongs to the methyltransferase superfamily. RsmH family.

It localises to the cytoplasm. It carries out the reaction cytidine(1402) in 16S rRNA + S-adenosyl-L-methionine = N(4)-methylcytidine(1402) in 16S rRNA + S-adenosyl-L-homocysteine + H(+). Functionally, specifically methylates the N4 position of cytidine in position 1402 (C1402) of 16S rRNA. The sequence is that of Ribosomal RNA small subunit methyltransferase H from Escherichia coli O139:H28 (strain E24377A / ETEC).